The primary structure comprises 409 residues: Thiaminase-1 (409 aa).

Residues 1 to 29 form the signal peptide; the sequence is MSKVKGFIYKPLMVMLALLLVVVSPAGAG. Cys143 (nucleophile) is an active-site residue. Residue Glu271 is the Proton acceptor of the active site.

As to quaternary structure, monomer.

The protein resides in the secreted. The catalysed reaction is pyridine + thiamine = heteropyrithiamine + 5-(2-hydroxyethyl)-4-methylthiazole. In terms of biological role, degrades thiamine by replacing its thiazole moiety with a wide range of nucleophiles. The chain is Thiaminase-1 from Paenibacillus thiaminolyticus (Bacillus thiaminolyticus).